Reading from the N-terminus, the 153-residue chain is Pro-corazonin (153 aa).

A signal peptide spans 1-20 (MLRLLLLPLFLFTLSMACMG). At Gln-21 the chain carries Pyrrolidone carboxylic acid. Asn-31 is subject to Asparagine amide. Positions 64–153 (LERCLLQLQH…AVEPNDYGKH (90 aa)) are excised as a propeptide.

The protein belongs to the corazonin family. As to expression, expression is restricted to 24 neurons in the larval CNS (8 in the brain and 16 in the ventral nerve cord) and 12-16 neurons in the pars lateralis of the adult brain.

The protein resides in the secreted. Its function is as follows. Cardioactive peptide. Corazonin is probably involved in the physiological regulation of the heart beat. Clock (Clk) and cycle (cyc) proteins negatively regulate Crz transcription in a cell-specific manner. The sequence is that of Pro-corazonin (Crz) from Drosophila virilis (Fruit fly).